A 645-amino-acid polypeptide reads, in one-letter code: Putative bifunctional exonuclease/endonuclease protein MT2247 (645 aa).

The region spanning 44–207 is the Exonuclease domain; the sequence is VVVDLETTGG…DDARATVDVL (164 aa). A GIY-YIG domain is found at 248–326; sequence HRPGVYLFRG…LSTHAPPYNR (79 aa). Residues 603–645 are disordered; sequence WQSDLPTEPHPSREQLFGRTGVDCRTGPPQPLLPGRQPFSTAG. Positions 635-645 are enriched in low complexity; sequence LPGRQPFSTAG.

The chain is Putative bifunctional exonuclease/endonuclease protein MT2247 from Mycobacterium tuberculosis (strain CDC 1551 / Oshkosh).